A 77-amino-acid polypeptide reads, in one-letter code: Cell division topological specificity factor (77 aa).

Belongs to the MinE family.

Its function is as follows. Prevents the cell division inhibition by proteins MinC and MinD at internal division sites while permitting inhibition at polar sites. This ensures cell division at the proper site by restricting the formation of a division septum at the midpoint of the long axis of the cell. The polypeptide is Cell division topological specificity factor (Helicobacter pylori (strain HPAG1)).